A 299-amino-acid chain; its full sequence is Circadian clock oscillator protein KaiA (299 aa).

The tract at residues 9–148 (SRPQIFICTL…LQLSKACRLP (140 aa)) is psR domain, binds oxidized quinones. The region spanning 9-179 (SRPQIFICTL…RLSQKLKERL (171 aa)) is the KaiA N-terminal domain. A flexible linker region spans residues 180–188 (GYLGVYYKR). The region spanning 189-297 (NPQQFFHKLT…CEMYRRSIPK (109 aa)) is the KaiA C-terminal domain.

Homodimer. The KaiABC complex composition changes during the circadian cycle to control KaiC phosphorylation. Complexes KaiC(6), KaiA(2-4):KaiC(6), KaiB(6):KaiC(6) and KaiC(6):KaiB(6):KaiA(12) are among the most important forms, many form cooperatively. KaiA and CikA bind to the same region of the KaiB(fs) form and therefore compete.

In terms of biological role, key component of the KaiABC oscillator complex, which constitutes the main circadian regulator in cyanobacteria. Complex composition changes during the circadian cycle to control KaiC phosphorylation. KaiA stimulates KaiC autophosphorylation, while KaiB sequesters KaiA, leading to KaiC autodephosphorylation. KaiA binding to the KaiC CII domain during the subjective day yields KaiA(2-4):KaiC(6) complexes which stimulate KaiC autophosphorylation. Phospho-Ser-431 KaiC accumulation triggers binding of KaiB during the subjective night to form the KaiB(6):KaiC(6) complex, leading to changes in the output regulators CikA and SasA. KaiB(6):KaiC(6) formation exposes a site for KaiA binding on KaiB that sequesters KaiA from KaiC's CII domain, making the KaiC(6):KaiB(6):KaiA(12) complex resulting in KaiC autodephosphorylation. Complete dephosphorylation of KaiC leads to dissociation of KaiA(2):KaiB(1), completing 1 cycle of the Kai oscillator. Functionally, binds oxidized quinones via the N-terminal PsR domain, allowing it to sense redox changes and possibly mediate clock input. This is Circadian clock oscillator protein KaiA from Acaryochloris marina (strain MBIC 11017).